Consider the following 1958-residue polypeptide: Echinoderm microtubule-associated protein-like 6 (1958 aa).

10 WD repeats span residues 59–100 (GHND…TVSL), 104–145 (VHTH…LLAS), 148–187 (GHSDRIFDISWDPYQPNRVVSCGVKHIKFWTLCGNALTAK), 195–233 (GDLQTILCLACAKEDITYSGALNGDIYVWKGLNLVRTIQ), 235–273 (AHSAGIFSMYACEEGFATGGRDGCIRLWDTDFKPITKID), 280–321 (GYKG…LILQ), 323–362 (HCEGELWALALHPKKPLAVTGSDDRSVRLWSLADHALIAR), 364–403 (NMEEAVRSVAFSPDGSQLALGMKDGSFIVLRVRDMTEVVH), 406–445 (DRKEVIHEMKFSPDGSYLAVGSNDGPVDVYAVAQRYKKIG), and 561–601 (GHSA…VSNG). The interval 603–626 (LETAPQEGGADSYSEESDSDLSDV) is disordered. A compositionally biased stretch (acidic residues) spans 615 to 626 (YSEESDSDLSDV). 10 WD repeats span residues 725 to 766 (GHDD…CLSL), 770 to 811 (QHQR…KIAT), 814 to 853 (GHKDKIFVVKCNPHHVDKLVTVGIKHIKFWQQAGGGFTSK), 861 to 900 (GKLETMMCVSYGRMEDLVFSGAATGDIFIWKDILLLKTVK), 901 to 940 (AHDGPVFAMYALDKGFVTGGKDGIVELWDDMFERCLKTYA), 996 to 1035 (HMEGEVWGLAAHPLLPICATVSDDKTLRIWELSAQHRMLA), 1038 to 1077 (KLKKGGRCCAFSPDGKALAVGLNDGSFLVVNADTVEDMVS), 1080 to 1120 (HRKE…RVGI), 1191 to 1230 (SDITDVNAASLTKDCSLLATGDDFGFVKLFSYPVKGQHAR), and 1236 to 1276 (GHSA…TQES). Residues 1322 to 1337 (KPHQQLKEVSVEERPP) are compositionally biased toward basic and acidic residues. The interval 1322-1353 (KPHQQLKEVSVEERPPVSRAAPQPEKLQKNNI) is disordered. WD repeat units follow at residues 1412–1456 (EHTD…TLSM), 1460–1501 (FHSK…KVAS), 1504–1543 (GHLERIFVVEFRPDSDTQFVSVGVKHMKFWTLAGSALLYK), 1553–1591 (AKMQTMLSVAFGANNLTFTGAINGDVYVWKDHFLIRLVA), 1593–1638 (AHTG…CRAF), 1685–1724 (HMEGEIWGLATHPSKDLFISASNDGTARIWDLADKKLLNK), 1726–1767 (SLGH…GKKR), 1768–1807 (DRKSAIQDIRISPDNRFLAVGSSEHTVDFYDLTQGTNLNR), 1880–1919 (ADKADVNCACVTHAGLNIVTGDDFGLVKLFDFPCTEKFAK), and 1925–1958 (GHSAHVTNIRFSYDDKYVVSTGGDDCSVFVWRCL).

Belongs to the WD repeat EMAP family.

The protein localises to the cytoplasm. It localises to the cytoskeleton. May modify the assembly dynamics of microtubules, such that microtubules are slightly longer, but more dynamic. The chain is Echinoderm microtubule-associated protein-like 6 (EML6) from Homo sapiens (Human).